Reading from the N-terminus, the 104-residue chain is Type VII secretion system extracellular protein B (104 aa).

This sequence belongs to the WXG100 family. Homodimer. When mixed with EsxA does not form heterodimers.

It localises to the secreted. Its function is as follows. Virulence factor that is important for the establishment of infection in the host. EsxB is required for EsxA synthesis as well as secretion. Mediates together with EsxA the release of S.aureus from the host cell. Also inhibits host cytokine production and thus modulates dendritic cell-mediated immunity. The sequence is that of Type VII secretion system extracellular protein B from Staphylococcus aureus (strain Mu50 / ATCC 700699).